The primary structure comprises 237 residues: Ras-related protein RABA3 (237 aa).

Glycine 35–threonine 42 lines the GTP pocket. An Effector region motif is present at residues serine 57–phenylalanine 65. GTP contacts are provided by residues aspartate 83–glutamine 87, asparagine 141–aspartate 144, and serine 172–alanine 173. Residues cysteine 235 and cysteine 237 are each lipidated (S-geranylgeranyl cysteine). Cysteine methyl ester is present on cysteine 237.

The protein belongs to the small GTPase superfamily. Rab family. As to expression, expressed in root tips.

The protein resides in the endosome membrane. It localises to the golgi apparatus. It is found in the trans-Golgi network membrane. Functionally, intracellular vesicle trafficking and protein transport. The chain is Ras-related protein RABA3 (RABA3) from Arabidopsis thaliana (Mouse-ear cress).